Reading from the N-terminus, the 366-residue chain is Ribosomal RNA small subunit methyltransferase H 1 (366 aa).

Positions methionine 1–arginine 46 are disordered. Positions histidine 25–lysine 37 are enriched in basic residues. Residues glycine 97–histidine 99, aspartate 117, phenylalanine 147, aspartate 166, and glutamine 173 contribute to the S-adenosyl-L-methionine site.

Belongs to the methyltransferase superfamily. RsmH family.

The protein resides in the cytoplasm. The enzyme catalyses cytidine(1402) in 16S rRNA + S-adenosyl-L-methionine = N(4)-methylcytidine(1402) in 16S rRNA + S-adenosyl-L-homocysteine + H(+). Specifically methylates the N4 position of cytidine in position 1402 (C1402) of 16S rRNA. This chain is Ribosomal RNA small subunit methyltransferase H 1, found in Lachnoclostridium phytofermentans (strain ATCC 700394 / DSM 18823 / ISDg) (Clostridium phytofermentans).